Here is a 465-residue protein sequence, read N- to C-terminus: Glutamate--tRNA ligase 2 (465 aa).

The 'HIGH' region signature appears at 8-18 (PSPTGLMHLGN). The 'KMSKS' region signature appears at 249–253 (PLSKR). Lys252 provides a ligand contact to ATP.

Belongs to the class-I aminoacyl-tRNA synthetase family. Glutamate--tRNA ligase type 1 subfamily. Monomer.

It is found in the cytoplasm. It carries out the reaction tRNA(Glu) + L-glutamate + ATP = L-glutamyl-tRNA(Glu) + AMP + diphosphate. Catalyzes the attachment of glutamate to tRNA(Glu) in a two-step reaction: glutamate is first activated by ATP to form Glu-AMP and then transferred to the acceptor end of tRNA(Glu). The polypeptide is Glutamate--tRNA ligase 2 (Coxiella burnetii (strain RSA 331 / Henzerling II)).